Consider the following 231-residue polypeptide: MPKHGKRYREVSKLVSRQELYEPDEAIELLKKTASAKFDETVEVAVKLGVDPRHADQQVRGTVVLPNGTGKTRRVLVFAKGDKAKEAEEAGADFVGAEDLVEKIQGGWLDFDVAIATPDMMGLVGRLGRILGPRGLMPNPKAGTVTMDIARAVKEVKAGKIEFRVDKTAIIHAPIGKASFEASKLKENFQALMDALLRAKPATAKGQYLKSVSLATTMGPGIRVNPLRAVK.

It belongs to the universal ribosomal protein uL1 family. As to quaternary structure, part of the 50S ribosomal subunit.

Its function is as follows. Binds directly to 23S rRNA. The L1 stalk is quite mobile in the ribosome, and is involved in E site tRNA release. Functionally, protein L1 is also a translational repressor protein, it controls the translation of the L11 operon by binding to its mRNA. This chain is Large ribosomal subunit protein uL1, found in Moorella thermoacetica (strain ATCC 39073 / JCM 9320).